A 397-amino-acid chain; its full sequence is MNIHEYQAKALLKSFGAPVADGVAIFSADEAEAAAKQLPGPLYVVKSQIHAGGRGKGKFKELSPDAKGGVRLAKSIEDVVANSKDMLGNTLVTKQTGPAGKQVNRLYIEDGADIDRELYLSILVDRSVGQVAFVVSTEGGMDIETVAHDTPEKIITVAIDPAAGVTAADSTAISDALKLEGAAREDGAKLFPILYKAFVEKDMALLEVNPLIVMTNGRLRVLDAKVSFDGNALFRHEDIRALRDKSEEDEKEIQAHEYDLAYVALDGNIGCMVNGAGLAMATMDIIKLYGAEPANFLDVGGGATKEKVTAAFKIITADPAVQGILVNIFGGIMKCDVIAEGVLAAVKEVGLKVPLVVRLEGTNVELGKKIINESGLNVISADDLDDAAQKIVKAVKG.

One can recognise an ATP-grasp domain in the interval 9–254 (KALLKSFGAP…KSEEDEKEIQ (246 aa)). ATP-binding positions include Lys-46, 53 to 55 (GRG), Glu-109, Ala-112, and Glu-117. Residues Asn-209 and Asp-223 each contribute to the Mg(2+) site. Substrate is bound by residues Asn-274 and 331–333 (GIM).

It belongs to the succinate/malate CoA ligase beta subunit family. In terms of assembly, heterotetramer of two alpha and two beta subunits. Mg(2+) is required as a cofactor.

The enzyme catalyses succinate + ATP + CoA = succinyl-CoA + ADP + phosphate. The catalysed reaction is GTP + succinate + CoA = succinyl-CoA + GDP + phosphate. Its pathway is carbohydrate metabolism; tricarboxylic acid cycle; succinate from succinyl-CoA (ligase route): step 1/1. Functionally, succinyl-CoA synthetase functions in the citric acid cycle (TCA), coupling the hydrolysis of succinyl-CoA to the synthesis of either ATP or GTP and thus represents the only step of substrate-level phosphorylation in the TCA. The beta subunit provides nucleotide specificity of the enzyme and binds the substrate succinate, while the binding sites for coenzyme A and phosphate are found in the alpha subunit. In Rhizobium rhizogenes (strain K84 / ATCC BAA-868) (Agrobacterium radiobacter), this protein is Succinate--CoA ligase [ADP-forming] subunit beta.